We begin with the raw amino-acid sequence, 296 residues long: tRNA pseudouridine synthase B (296 aa).

The Nucleophile role is filled by D38.

This sequence belongs to the pseudouridine synthase TruB family. Type 1 subfamily.

It catalyses the reaction uridine(55) in tRNA = pseudouridine(55) in tRNA. In terms of biological role, responsible for synthesis of pseudouridine from uracil-55 in the psi GC loop of transfer RNAs. In Ehrlichia ruminantium (strain Gardel), this protein is tRNA pseudouridine synthase B.